Here is an 88-residue protein sequence, read N- to C-terminus: Translation initiation factor IF-1 1 (88 aa).

The 72-residue stretch at 1–72 (MAKEELIELD…TKGRINFRHK (72 aa)) folds into the S1-like domain.

Belongs to the IF-1 family. In terms of assembly, component of the 30S ribosomal translation pre-initiation complex which assembles on the 30S ribosome in the order IF-2 and IF-3, IF-1 and N-formylmethionyl-tRNA(fMet); mRNA recruitment can occur at any time during PIC assembly.

It localises to the cytoplasm. Its function is as follows. One of the essential components for the initiation of protein synthesis. Stabilizes the binding of IF-2 and IF-3 on the 30S subunit to which N-formylmethionyl-tRNA(fMet) subsequently binds. Helps modulate mRNA selection, yielding the 30S pre-initiation complex (PIC). Upon addition of the 50S ribosomal subunit IF-1, IF-2 and IF-3 are released leaving the mature 70S translation initiation complex. This is Translation initiation factor IF-1 1 from Burkholderia mallei (strain ATCC 23344).